Here is a 190-residue protein sequence, read N- to C-terminus: MTRDEIVAIFQKTGAMLSGHFRLTSGRHSNRYFQCALVLQHPDYSELLCRELAARFAGDGISVVIGPAMGGIIVSYEVARALGVRGLFAERENGVMTLRRGFSIEPGERVLVVEDVITTGGSVREVMEAVRKSGGTVAGAGVLVDRSNGAVDLGVRTEALLTAEVVSYAPEDCPFCKQGIPAVKPGSRKI.

Position 114–122 (114–122 (EDVITTGGS)) interacts with 5-phospho-alpha-D-ribose 1-diphosphate. 2 residues coordinate orotate: Thr-118 and Arg-146.

Belongs to the purine/pyrimidine phosphoribosyltransferase family. PyrE subfamily. As to quaternary structure, homodimer. Mg(2+) is required as a cofactor.

The catalysed reaction is orotidine 5'-phosphate + diphosphate = orotate + 5-phospho-alpha-D-ribose 1-diphosphate. The protein operates within pyrimidine metabolism; UMP biosynthesis via de novo pathway; UMP from orotate: step 1/2. Its function is as follows. Catalyzes the transfer of a ribosyl phosphate group from 5-phosphoribose 1-diphosphate to orotate, leading to the formation of orotidine monophosphate (OMP). The polypeptide is Orotate phosphoribosyltransferase (Pelotomaculum thermopropionicum (strain DSM 13744 / JCM 10971 / SI)).